Here is a 364-residue protein sequence, read N- to C-terminus: Probable endopolygalacturonase B (364 aa).

The first 20 residues, 1 to 20 (MHFFQSSLVAATMGAALVAA), serve as a signal peptide directing secretion. Positions 21-29 (APAADLETR) are excised as a propeptide. A disulfide bridge links Cys32 with Cys47. N-linked (GlcNAc...) asparagine glycosylation is found at Asn138 and Asn141. PbH1 repeat units lie at residues 159–188 (SDHLTIKDVLLDNSAGTKLGHNTDAFDVGS), 189–210 (STYITIDGATVYNQDDCLAVNS), 211–231 (GEHITFTNGYCNGGHGLSIGS), 240–261 (VNDVTISNSQVINSQNGARIKT), 269–291 (VTGVKFQDISLKGITKYGIVVQQ), and 303–324 (TNGVKVSDITFEKVTGTVTSSA). Asp203 (proton donor) is an active-site residue. Cys205 and Cys221 are disulfide-bonded. His225 is a catalytic residue. Cys331 and Cys336 form a disulfide bridge. The N-linked (GlcNAc...) asparagine glycan is linked to Asn338. A disulfide bridge links Cys355 with Cys364.

Belongs to the glycosyl hydrolase 28 family.

It is found in the secreted. The enzyme catalyses (1,4-alpha-D-galacturonosyl)n+m + H2O = (1,4-alpha-D-galacturonosyl)n + (1,4-alpha-D-galacturonosyl)m.. In terms of biological role, involved in maceration and soft-rotting of plant tissue. Hydrolyzes the 1,4-alpha glycosidic bonds of de-esterified pectate in the smooth region of the plant cell wall. The sequence is that of Probable endopolygalacturonase B (pgaB) from Aspergillus fumigatus (strain ATCC MYA-4609 / CBS 101355 / FGSC A1100 / Af293) (Neosartorya fumigata).